Consider the following 148-residue polypeptide: Fluoride-specific ion channel FluC 2 (148 aa).

The next 4 helical transmembrane spans lie at 23–43 (LGHLGWIFAGGALGAAARLAV), 61–81 (GTLAANAAGSFLIAIFGTLIF), 92–112 (FWVLGFLGSLTTFSSYALHTL), and 120–140 (LLGGLYGGGSLLLGLLAALAG). Positions 99 and 102 each coordinate Na(+).

Belongs to the fluoride channel Fluc/FEX (TC 1.A.43) family.

The protein localises to the cell membrane. It catalyses the reaction fluoride(in) = fluoride(out). Its activity is regulated as follows. Na(+) is not transported, but it plays an essential structural role and its presence is essential for fluoride channel function. Its function is as follows. Fluoride-specific ion channel. Important for reducing fluoride concentration in the cell, thus reducing its toxicity. The chain is Fluoride-specific ion channel FluC 2 from Rubrobacter xylanophilus (strain DSM 9941 / JCM 11954 / NBRC 16129 / PRD-1).